Here is a 304-residue protein sequence, read N- to C-terminus: Coenzyme PQQ synthesis protein B (304 aa).

The protein belongs to the PqqB family.

The protein operates within cofactor biosynthesis; pyrroloquinoline quinone biosynthesis. May be involved in the transport of PQQ or its precursor to the periplasm. The chain is Coenzyme PQQ synthesis protein B from Pseudomonas paraeruginosa (strain DSM 24068 / PA7) (Pseudomonas aeruginosa (strain PA7)).